We begin with the raw amino-acid sequence, 564 residues long: Type 2 DNA topoisomerase 6 subunit B (564 aa).

ATP is bound by residues N46, D78, T99 to K100, G109 to S116, and K471.

This sequence belongs to the TOP6B family. In terms of assembly, homodimer. Heterotetramer of two Top6A and two Top6B chains.

It catalyses the reaction ATP-dependent breakage, passage and rejoining of double-stranded DNA.. Relaxes both positive and negative superturns and exhibits a strong decatenase activity. This Pyrococcus horikoshii (strain ATCC 700860 / DSM 12428 / JCM 9974 / NBRC 100139 / OT-3) protein is Type 2 DNA topoisomerase 6 subunit B.